The chain runs to 65 residues: uncharacterized protein (65 aa).

The next 2 membrane-spanning stretches (helical) occupy residues Ile-12–Val-31 and Leu-41–Val-63.

It localises to the cell membrane. This is an uncharacterized protein from Halalkalibacterium halodurans (strain ATCC BAA-125 / DSM 18197 / FERM 7344 / JCM 9153 / C-125) (Bacillus halodurans).